The primary structure comprises 299 residues: Probable lipid kinase YegS (299 aa).

The 132-residue stretch at 2–133 (AEFPASLLIL…IDMAQVNKQT (132 aa)) folds into the DAGKc domain. ATP-binding positions include threonine 40, 66–72 (GDGTINE), and threonine 95. Mg(2+) contacts are provided by leucine 215, aspartate 218, and leucine 220. Residue glutamate 271 is the Proton acceptor of the active site.

Belongs to the diacylglycerol/lipid kinase family. YegS lipid kinase subfamily. Requires Mg(2+) as cofactor. The cofactor is Ca(2+).

It localises to the cytoplasm. Functionally, probably phosphorylates lipids; the in vivo substrate is unknown. The polypeptide is Probable lipid kinase YegS (Escherichia coli (strain 55989 / EAEC)).